Here is a 134-residue protein sequence, read N- to C-terminus: uncharacterized protein (134 aa).

A signal peptide spans 1 to 16 (MAKAVALLLAAIAASA).

This is an uncharacterized protein from Oryza sativa subsp. indica (Rice).